A 363-amino-acid polypeptide reads, in one-letter code: Forkhead box protein I1 (363 aa).

Over residues Met1 to Pro18 the composition is skewed to low complexity. Disordered stretches follow at residues Met1 to Gln24, Asp210 to Ala269, and Thr344 to Tyr363. The fork-head DNA-binding region spans Arg125–Lys219. Basic and acidic residues predominate over residues Lys231–Glu243. Low complexity-rich tracts occupy residues Ser244–Pro258 and Gln347–Tyr363.

It localises to the nucleus. Transcription factor. Essential for ventral specification of the early cephalic (head) ectoderm during gastrulation, playing a role in the 'non-neural' versus 'neural' cell fate choice. Binds to DNA via the target sequence 5'-[AG]TAAA[CT]A-3', with 5'-ATAAACA-3' being the preferred binding site. In Xenopus tropicalis (Western clawed frog), this protein is Forkhead box protein I1.